The chain runs to 1179 residues: DNA-directed RNA polymerase subunit beta (1179 aa).

The span at 1153-1162 (MREMEDEDEG) shows a compositional bias: acidic residues. Residues 1153-1179 (MREMEDEDEGNGEKLNLVLEGGSLNEE) are disordered.

Belongs to the RNA polymerase beta chain family. The RNAP catalytic core consists of 2 alpha, 1 beta, 1 beta' and 1 omega subunit. When a sigma factor is associated with the core the holoenzyme is formed, which can initiate transcription.

The enzyme catalyses RNA(n) + a ribonucleoside 5'-triphosphate = RNA(n+1) + diphosphate. Functionally, DNA-dependent RNA polymerase catalyzes the transcription of DNA into RNA using the four ribonucleoside triphosphates as substrates. The protein is DNA-directed RNA polymerase subunit beta of Brevibacillus brevis (strain 47 / JCM 6285 / NBRC 100599).